The following is a 262-amino-acid chain: Expansin-A13 (262 aa).

The first 22 residues, 1–22 (MAGVARMLAAVVCAIMPAAAMA), serve as a signal peptide directing secretion. An Expansin-like EG45 domain is found at 52–167 (GGACGYGNLY…QRVPCMKKGG (116 aa)). Positions 177–257 (YFQLVLLTNV…GWRFGQTFAS (81 aa)) constitute an Expansin-like CBD domain.

Belongs to the expansin family. Expansin A subfamily. In terms of tissue distribution, expressed in roots and flowers.

The protein resides in the secreted. It localises to the cell wall. Its subcellular location is the membrane. Its function is as follows. May cause loosening and extension of plant cell walls by disrupting non-covalent bonding between cellulose microfibrils and matrix glucans. No enzymatic activity has been found. May be required for rapid internodal elongation in deepwater rice during submergence. The polypeptide is Expansin-A13 (EXPA13) (Oryza sativa subsp. japonica (Rice)).